Reading from the N-terminus, the 141-residue chain is Large ribosomal subunit protein uL11 (141 aa).

The protein belongs to the universal ribosomal protein uL11 family. As to quaternary structure, part of the ribosomal stalk of the 50S ribosomal subunit. Interacts with L10 and the large rRNA to form the base of the stalk. L10 forms an elongated spine to which L12 dimers bind in a sequential fashion forming a multimeric L10(L12)X complex. One or more lysine residues are methylated.

Functionally, forms part of the ribosomal stalk which helps the ribosome interact with GTP-bound translation factors. In Exiguobacterium sp. (strain ATCC BAA-1283 / AT1b), this protein is Large ribosomal subunit protein uL11.